We begin with the raw amino-acid sequence, 486 residues long: Transcription factor VOZ1 (486 aa).

The segment at 208-405 (PPSAFLGPKC…VDGKKTSKGK (198 aa)) is VOZ. Zn(2+)-binding residues include C217, C222, C236, and H240. The C3H1-type; atypical zinc finger occupies 217–240 (CALWDCPRPAQGFDWFQDYCSSFH). The segment at 424–445 (EFPPENNTTNTTNNNKRCIKGR) is disordered. Positions 429–438 (NNTTNTTNNN) are enriched in low complexity.

Homodimer. Interacts with phytochrome B (phyB). In terms of tissue distribution, ubiquitous. Expressed in the vascular bundles of various tissues, specifically in the phloem.

The protein resides in the cytoplasm. The protein localises to the nucleus. Transcriptional activator acting positively in the phytochrome B signaling pathway. Functions redundantly with VOZ2 to promote flowering downstream of phytochrome B (phyB). Down-regulates 'FLOWERING LOCUS C' (FLC) and up-regulates 'FLOWERING LOCUS T' (FT). Binds to the 38-bp cis-acting region of the AVP1 gene. Interacts with phyB in the cytoplasm and is translocated to the nucleus at signal transmission, where it is subjected to degradation in a phytochrome-dependent manner. The chain is Transcription factor VOZ1 (VOZ1) from Arabidopsis thaliana (Mouse-ear cress).